The chain runs to 374 residues: tRNA-specific 2-thiouridylase MnmA (374 aa).

Residues 16 to 23 (GMSGGVDS) and M42 contribute to the ATP site. The interaction with target base in tRNA stretch occupies residues 102–104 (NPD). C107 functions as the Nucleophile in the catalytic mechanism. A disulfide bridge connects residues C107 and C203. G131 provides a ligand contact to ATP. The segment at 153–155 (KDQ) is interaction with tRNA. C203 serves as the catalytic Cysteine persulfide intermediate. Residues 311-312 (RY) are interaction with tRNA.

The protein belongs to the MnmA/TRMU family.

Its subcellular location is the cytoplasm. The catalysed reaction is S-sulfanyl-L-cysteinyl-[protein] + uridine(34) in tRNA + AH2 + ATP = 2-thiouridine(34) in tRNA + L-cysteinyl-[protein] + A + AMP + diphosphate + H(+). Catalyzes the 2-thiolation of uridine at the wobble position (U34) of tRNA, leading to the formation of s(2)U34. This Exiguobacterium sibiricum (strain DSM 17290 / CCUG 55495 / CIP 109462 / JCM 13490 / 255-15) protein is tRNA-specific 2-thiouridylase MnmA.